The primary structure comprises 103 residues: NADH-quinone oxidoreductase subunit K (103 aa).

3 consecutive transmembrane segments (helical) span residues 5–25, 30–50, and 66–86; these read ISSY…GALT, VVVL…LVAF, and LFTM…LIAL.

It belongs to the complex I subunit 4L family. NDH-1 is composed of 14 different subunits. Subunits NuoA, H, J, K, L, M, N constitute the membrane sector of the complex.

The protein resides in the cell membrane. The enzyme catalyses a quinone + NADH + 5 H(+)(in) = a quinol + NAD(+) + 4 H(+)(out). Its function is as follows. NDH-1 shuttles electrons from NADH, via FMN and iron-sulfur (Fe-S) centers, to quinones in the respiratory chain. The immediate electron acceptor for the enzyme in this species is believed to be a menaquinone. Couples the redox reaction to proton translocation (for every two electrons transferred, four hydrogen ions are translocated across the cytoplasmic membrane), and thus conserves the redox energy in a proton gradient. The chain is NADH-quinone oxidoreductase subunit K from Brevibacillus brevis (strain 47 / JCM 6285 / NBRC 100599).